The chain runs to 312 residues: Malate dehydrogenase (312 aa).

NAD(+) is bound by residues 7-12 and Asp32; that span reads GAGNVG. The substrate site is built by Arg82 and Arg88. NAD(+)-binding positions include Asn95 and 118 to 120; that span reads VSN. 2 residues coordinate substrate: Asn120 and Arg151. His175 (proton acceptor) is an active-site residue.

The protein belongs to the LDH/MDH superfamily. MDH type 3 family.

The enzyme catalyses (S)-malate + NAD(+) = oxaloacetate + NADH + H(+). Its function is as follows. Catalyzes the reversible oxidation of malate to oxaloacetate. The sequence is that of Malate dehydrogenase from Cytophaga hutchinsonii (strain ATCC 33406 / DSM 1761 / CIP 103989 / NBRC 15051 / NCIMB 9469 / D465).